Here is a 141-residue protein sequence, read N- to C-terminus: Large ribosomal subunit protein uL14 (141 aa).

It belongs to the universal ribosomal protein uL14 family.

The polypeptide is Large ribosomal subunit protein uL14 (RPL23) (Tetrahymena thermophila (strain SB210)).